Consider the following 625-residue polypeptide: Exonuclease mut-7 homolog (625 aa).

Ser-17 carries the phosphoserine modification. The 3'-5' exonuclease domain maps to 410-602 (LIIVNKADEF…IYNTLIERVS (193 aa)).

The protein belongs to the mut-7 family. Interacts with AGO1; the interaction is not RNA dependent. Mg(2+) is required as a cofactor.

In terms of biological role, possesses 3'-5' exoribonuclease activity. Required for 3'-end trimming of AGO1-bound miRNAs, in particular multiple-isoform miRNAs, which represents a critical step in miRNA maturation. In Drosophila melanogaster (Fruit fly), this protein is Exonuclease mut-7 homolog (Nbr).